We begin with the raw amino-acid sequence, 279 residues long: Pantothenate synthetase (279 aa).

27–34 contacts ATP; the sequence is MGYLHEGH. His34 functions as the Proton donor in the catalytic mechanism. Gln58 serves as a coordination point for (R)-pantoate. Position 58 (Gln58) interacts with beta-alanine. 144 to 147 provides a ligand contact to ATP; the sequence is GKKD. (R)-pantoate is bound at residue Gln150. ATP contacts are provided by residues Val173 and 181–184; that span reads MSSR.

It belongs to the pantothenate synthetase family. Homodimer.

The protein localises to the cytoplasm. The enzyme catalyses (R)-pantoate + beta-alanine + ATP = (R)-pantothenate + AMP + diphosphate + H(+). The protein operates within cofactor biosynthesis; (R)-pantothenate biosynthesis; (R)-pantothenate from (R)-pantoate and beta-alanine: step 1/1. Functionally, catalyzes the condensation of pantoate with beta-alanine in an ATP-dependent reaction via a pantoyl-adenylate intermediate. In Geobacter sp. (strain M21), this protein is Pantothenate synthetase.